A 1025-amino-acid chain; its full sequence is Multidrug resistance protein MdtC (1025 aa).

Helical transmembrane passes span phenylalanine 3–leucine 23, glutamate 333–leucine 353, isoleucine 360–cysteine 380, leucine 387–leucine 407, valine 431–leucine 451, phenylalanine 463–proline 483, leucine 528–proline 548, valine 853–serine 873, valine 875–leucine 895, leucine 897–valine 917, proline 953–glycine 973, and isoleucine 984–valine 1004.

It belongs to the resistance-nodulation-cell division (RND) (TC 2.A.6) family. MdtC subfamily. As to quaternary structure, part of a tripartite efflux system composed of MdtA, MdtB and MdtC. MdtC forms a heteromultimer with MdtB.

The protein localises to the cell inner membrane. The MdtABC tripartite complex confers resistance against novobiocin and deoxycholate. This Escherichia coli (strain ATCC 8739 / DSM 1576 / NBRC 3972 / NCIMB 8545 / WDCM 00012 / Crooks) protein is Multidrug resistance protein MdtC.